A 192-amino-acid chain; its full sequence is UPF0149 protein YgfB (192 aa).

It belongs to the UPF0149 family.

The chain is UPF0149 protein YgfB from Escherichia coli O127:H6 (strain E2348/69 / EPEC).